We begin with the raw amino-acid sequence, 252 residues long: 3-dehydroquinate dehydratase (252 aa).

Residues S21, 46 to 48 (EWR), and R82 contribute to the 3-dehydroquinate site. H143 functions as the Proton donor/acceptor in the catalytic mechanism. Catalysis depends on K170, which acts as the Schiff-base intermediate with substrate. The 3-dehydroquinate site is built by R213, S232, and Q236.

Belongs to the type-I 3-dehydroquinase family. In terms of assembly, homodimer.

The enzyme catalyses 3-dehydroquinate = 3-dehydroshikimate + H2O. Its pathway is metabolic intermediate biosynthesis; chorismate biosynthesis; chorismate from D-erythrose 4-phosphate and phosphoenolpyruvate: step 3/7. In terms of biological role, involved in the third step of the chorismate pathway, which leads to the biosynthesis of aromatic amino acids. Catalyzes the cis-dehydration of 3-dehydroquinate (DHQ) and introduces the first double bond of the aromatic ring to yield 3-dehydroshikimate. In Escherichia coli O127:H6 (strain E2348/69 / EPEC), this protein is 3-dehydroquinate dehydratase.